Consider the following 335-residue polypeptide: MADVATKHPMEDEVKKTEASSLVGKLETDVEIKASADKFHHMFAGKPHHVSKASPGNIQGCDLHEGDWGTVGSIVFWNYVHDGEAKVAKERIEAVEPDKNLITFRVIEGDLMKEYKSFLLTIQVTPKPGGPGSIVHWHLEYEKISEEVAHPETLLQFCVEVSKEIDEHLLAEEEEVKTPETPSLVGKLETDVEIKASAEKFHHMFAGKPHHVSKASPGNIQGCDLHEGDWGQVGSIVFWNYVHDREAKVAKERIEAVEPNKNLITFRVIDGDLMKEYKSFLLTIQVTPKLGGPGSIVHWHLEYEKISEEVAHPETLLQFCVEVSKEIDEHLLAEE.

It belongs to the MLP family.

Functionally, can bind steroids (in vitro), and may also bind other types of hydrophobic ligands. This is MLP-like protein 28 (MLP28) from Arabidopsis thaliana (Mouse-ear cress).